A 151-amino-acid chain; its full sequence is S-ribosylhomocysteine lyase (151 aa).

The Fe cation site is built by histidine 54, histidine 58, and cysteine 121.

Belongs to the LuxS family. Homodimer. It depends on Fe cation as a cofactor.

The catalysed reaction is S-(5-deoxy-D-ribos-5-yl)-L-homocysteine = (S)-4,5-dihydroxypentane-2,3-dione + L-homocysteine. Involved in the synthesis of autoinducer 2 (AI-2) which is secreted by bacteria and is used to communicate both the cell density and the metabolic potential of the environment. The regulation of gene expression in response to changes in cell density is called quorum sensing. Catalyzes the transformation of S-ribosylhomocysteine (RHC) to homocysteine (HC) and 4,5-dihydroxy-2,3-pentadione (DPD). The sequence is that of S-ribosylhomocysteine lyase from Clostridium botulinum (strain Alaska E43 / Type E3).